Reading from the N-terminus, the 65-residue chain is Large ribosomal subunit protein eL24 (65 aa).

Residues Cys6, Cys9, Cys32, and Cys36 each coordinate Zn(2+). A C4-type zinc finger spans residues 6–36 (CAFCGADIPPGYGIMYVKSDGTVLRYCSRKC).

This sequence belongs to the eukaryotic ribosomal protein eL24 family. Part of the 50S ribosomal subunit. Forms a cluster with proteins L3 and L14. Zn(2+) is required as a cofactor.

Its function is as follows. Binds to the 23S rRNA. The polypeptide is Large ribosomal subunit protein eL24 (Pyrobaculum arsenaticum (strain DSM 13514 / JCM 11321 / PZ6)).